Here is a 492-residue protein sequence, read N- to C-terminus: MEPSSKKVTGRLMLAVGGAVLGSLQFGYNTGVINAPQKVIEEFYNQTWIHRYGERILPTTLTTLWSLSVAIFSVGGMIGSFSVGLFVNRFGRRNSMLMMNLLAFVSAVLMGFSKLAKSFEMLILGRFIIGVYCGLTTGFVPMYVGEVSPTALRGALGTLHQLGIVVGILIAQVFGLDSIMGNEDLWPLLLSVIFVPALLQCIVLPLCPESPRFLLINRNEENRAKSVLKKLRGNADVTRDLQEMKEESRQMMREKKVTILELFRSPAYRQPILSAVVLQLSQQLSGINAVFYYSTSIFEKAGVQQPVYATIGSGIVNTAFTVVSLFVVERAGRRTLHLIGLAGMAACAVLMTIALALLEQLPWMSYLSIVAIFGFVAFFEVGPGPIPWFIVAELFSQGPRPAAVAVAGFSNWTSNFIVGMCFQYVEQLCGPYVFIIFTVLLVLFFIFTYFKVPETKGRTFDEIASGFRQGGASQSDKTPEELFHPLGADSQV.

Met1 carries the post-translational modification N-acetylmethionine. The Cytoplasmic portion of the chain corresponds to 1 to 11 (MEPSSKKVTGR). A helical membrane pass occupies residues 12–33 (LMLAVGGAVLGSLQFGYNTGVI). The Extracellular portion of the chain corresponds to 34-66 (NAPQKVIEEFYNQTWIHRYGERILPTTLTTLWS). N-linked (GlcNAc...) asparagine glycosylation occurs at Asn45. Residues 67–87 (LSVAIFSVGGMIGSFSVGLFV) traverse the membrane as a helical segment. The Cytoplasmic portion of the chain corresponds to 88–90 (NRF). Residues 91–112 (GRRNSMLMMNLLAFVSAVLMGF) traverse the membrane as a helical segment. At 113–120 (SKLAKSFE) the chain is on the extracellular side. Residues 121–144 (MLILGRFIIGVYCGLTTGFVPMYV) form a helical membrane-spanning segment. Topologically, residues 145–155 (GEVSPTALRGA) are cytoplasmic. Residues 156-176 (LGTLHQLGIVVGILIAQVFGL) form a helical membrane-spanning segment. Residue Gln161 coordinates D-glucose. The Extracellular segment spans residues 177-185 (DSIMGNEDL). Residues 186–206 (WPLLLSVIFVPALLQCIVLPL) form a helical membrane-spanning segment. Residues 207 to 271 (CPESPRFLLI…LFRSPAYRQP (65 aa)) are Cytoplasmic-facing. Residue Ser226 is modified to Phosphoserine. Residues 272-293 (ILSAVVLQLSQQLSGINAVFYY) form a helical membrane-spanning segment. D-glucose is bound by residues 282-283 (QQ) and Asn288. The Extracellular segment spans residues 294–306 (STSIFEKAGVQQP). A helical membrane pass occupies residues 307–328 (VYATIGSGIVNTAFTVVSLFVV). Asn317 lines the D-glucose pocket. At 329 to 334 (ERAGRR) the chain is on the cytoplasmic side. A helical membrane pass occupies residues 335–355 (TLHLIGLAGMAACAVLMTIAL). At 356–365 (ALLEQLPWMS) the chain is on the extracellular side. The chain crosses the membrane as a helical span at residues 366 to 388 (YLSIVAIFGFVAFFEVGPGPIPW). 2 residues coordinate D-glucose: Glu380 and Trp388. At 389–401 (FIVAELFSQGPRP) the chain is on the cytoplasmic side. Residues 402–422 (AAVAVAGFSNWTSNFIVGMCF) form a helical membrane-spanning segment. Over 423-429 (QYVEQLC) the chain is Extracellular. Residues 430–450 (GPYVFIIFTVLLVLFFIFTYF) form a helical membrane-spanning segment. The Cytoplasmic segment spans residues 451-492 (KVPETKGRTFDEIASGFRQGGASQSDKTPEELFHPLGADSQV). The residue at position 465 (Ser465) is a Phosphoserine. Positions 468 to 492 (RQGGASQSDKTPEELFHPLGADSQV) are disordered. Position 478 is a phosphothreonine (Thr478). Ser490 bears the Phosphoserine mark.

This sequence belongs to the major facilitator superfamily. Sugar transporter (TC 2.A.1.1) family. Glucose transporter subfamily. In terms of assembly, found in a complex with ADD2, DMTN and SLC2A1. Interacts (via C-terminus cytoplasmic region) with DMTN. Interacts with SNX27; the interaction is required when endocytosed to prevent degradation in lysosomes and promote recycling to the plasma membrane. Interacts with GIPC (via PDZ domain). Interacts with STOM. Interacts with SGTA (via Gln-rich region). Interacts with BSG. Interacts with SMIM43; the interaction may promote SLC2A1-mediated glucose transport to meet the energy needs of mesendoderm differentiation. Phosphorylation at Ser-226 by PKC promotes glucose uptake by increasing cell membrane localization.

The protein resides in the cell membrane. It localises to the photoreceptor inner segment. The catalysed reaction is D-glucose(out) = D-glucose(in). With respect to regulation, the uptake of glucose is inhibited by cytochalasin B. Glucose uptake is increased in response to phorbol ester 12-O-tetradecanoylphorbol-13-acetate (TPA) treatment: TPA-induced glucose uptake requires phosphorylation at Ser-226. Its function is as follows. Facilitative glucose transporter, which is responsible for constitutive or basal glucose uptake. Has a very broad substrate specificity; can transport a wide range of aldoses including both pentoses and hexoses. Most important energy carrier of the brain: present at the blood-brain barrier and assures the energy-independent, facilitative transport of glucose into the brain. In association with BSG and NXNL1, promotes retinal cone survival by increasing glucose uptake into photoreceptors. Required for mesendoderm differentiation. In Oryctolagus cuniculus (Rabbit), this protein is Solute carrier family 2, facilitated glucose transporter member 1.